The primary structure comprises 348 residues: WD repeat-containing protein JIP5 (348 aa).

WD repeat units lie at residues 5 to 44, 51 to 90, 94 to 132, 135 to 174, 179 to 218, 223 to 261, and 264 to 304; these read KLKNQPFDVAFHPKEPVVFSSLLTGQVCAWSYDDATGETS, PSKRTARALSIEENGDEIWMGGKSGSLFQLSTRDGSMTRE, AHECPINRVYCVNRNLVATGDDDGVIKLWDPRQADSIRT, QHFDYISDFTYFDDKRQLVATSGDGHLSVIDIRSNKSTPL, DQEDELLSIVPIKGGQKAIVGSGLGILSVWNRQMGWADSV, GHPASIDAIVALTPDIIATGSEDGMIRVIQVLPHKFLGV, and THEE…EDSD. Residues 299–318 are compositionally biased toward acidic residues; it reads LFEDSDEDDEMEEDEPDSDE. Residues 299-348 are disordered; that stretch reads LFEDSDEDDEMEEDEPDSDEEKSKKKKKDNGMKDMSRGQAENDGSFFADL.

This sequence belongs to the WD repeat WDR55 family.

It is found in the nucleus. The protein resides in the nucleolus. The sequence is that of WD repeat-containing protein JIP5 (JIP5) from Cryptococcus neoformans var. neoformans serotype D (strain JEC21 / ATCC MYA-565) (Filobasidiella neoformans).